The primary structure comprises 437 residues: Glutamate-1-semialdehyde 2,1-aminomutase (437 aa).

The residue at position 273 (Lys273) is an N6-(pyridoxal phosphate)lysine.

It belongs to the class-III pyridoxal-phosphate-dependent aminotransferase family. HemL subfamily. Homodimer. It depends on pyridoxal 5'-phosphate as a cofactor.

Its subcellular location is the cytoplasm. The catalysed reaction is (S)-4-amino-5-oxopentanoate = 5-aminolevulinate. Its pathway is porphyrin-containing compound metabolism; protoporphyrin-IX biosynthesis; 5-aminolevulinate from L-glutamyl-tRNA(Glu): step 2/2. In Chlamydia felis (strain Fe/C-56) (Chlamydophila felis), this protein is Glutamate-1-semialdehyde 2,1-aminomutase.